The chain runs to 367 residues: MNLLTVSTDLISIFLFTTLFLFFARKVAKKVGLVDKPNFRKRHQGLIPLVGGISVYAGICFTFGIVDYYIPHASLYLACAGVLVFIGALDDRFDISVKIRATIQAAVGIVMMVFGKLYLSSLGYIFGSWEMVLGPFGYFLTLFAVWAAINAFNMVDGIDGLLGGLSCVSFAAIGMILWFDGQTSLAIWCFAMIAAILPYIMLNLGILGRRYKVFMGDAGSTLIGFTVIWILLETTQGKTHPISPVTALWIIAIPLMDMVAIMYRRLRKGMSPFSPDRQHIHHLIMRAGFTSRQAFVLITLAAALLASIGVLAEYSHFVPEWVMLVLFLLAFFLYGYCIKRAWKVARFIKRVKRRLRRNRGGSPNLTK.

Transmembrane regions (helical) follow at residues 3–23 (LLTVSTDLISIFLFTTLFLFF), 46–66 (LIPLVGGISVYAGICFTFGIV), 69–89 (YIPHASLYLACAGVLVFIGAL), 132–152 (VLGPFGYFLTLFAVWAAINAF), 158–178 (IDGLLGGLSCVSFAAIGMILW), 187–207 (IWCFAMIAAILPYIMLNLGIL), 213–233 (VFMGDAGSTLIGFTVIWILLE), 242–262 (ISPVTALWIIAIPLMDMVAIM), 294–314 (AFVLITLAAALLASIGVLAEY), and 318–338 (VPEWVMLVLFLLAFFLYGYCI).

The protein belongs to the glycosyltransferase 4 family. WecA subfamily. Mg(2+) is required as a cofactor. It depends on Mn(2+) as a cofactor.

It is found in the cell inner membrane. The catalysed reaction is di-trans,octa-cis-undecaprenyl phosphate + UDP-N-acetyl-alpha-D-glucosamine = N-acetyl-alpha-D-glucosaminyl-di-trans,octa-cis-undecaprenyl diphosphate + UMP. It functions in the pathway bacterial outer membrane biogenesis; LPS O-antigen biosynthesis. It participates in bacterial outer membrane biogenesis; enterobacterial common antigen biosynthesis. In terms of biological role, catalyzes the transfer of the GlcNAc-1-phosphate moiety from UDP-GlcNAc onto the carrier lipid undecaprenyl phosphate (C55-P), yielding GlcNAc-pyrophosphoryl-undecaprenyl (GlcNAc-PP-C55). The chain is Undecaprenyl-phosphate alpha-N-acetylglucosaminyl 1-phosphate transferase from Escherichia coli O6:H1 (strain CFT073 / ATCC 700928 / UPEC).